The primary structure comprises 309 residues: MMAAPVMADWRAALPEVRGRIGFDVPLGPVTWFRVGGPAEVMFRPADIEDLSRFLAALAPEVPVLPIGAASNLIVRDGGIAGVVVRLVRGFADIEVQPDGIVAGAAALDATIAEHAAAAGLTGLEFLSGIPGSLGGAVAMNAGAYGAEIRDVLDWAEIVGRDGTVARYAAGDLALTYRHARLPEGGIVVRARLHARPGEAAAIAARMADIRASREATQPVRARTGGSTFRNPEGDKAWRLIDEAGCRGLIHGGAQVSEKHCNFLINLGEATAADIEGLGETVRRRVRERTGVELIWEIRRVGLPCRGAA.

The region spanning 34–198 is the FAD-binding PCMH-type domain; the sequence is RVGGPAEVMF…VRARLHARPG (165 aa). The active site involves Arg-178. Ser-227 serves as the catalytic Proton donor. Residue Glu-297 is part of the active site.

The protein belongs to the MurB family. FAD serves as cofactor.

The protein resides in the cytoplasm. It catalyses the reaction UDP-N-acetyl-alpha-D-muramate + NADP(+) = UDP-N-acetyl-3-O-(1-carboxyvinyl)-alpha-D-glucosamine + NADPH + H(+). The protein operates within cell wall biogenesis; peptidoglycan biosynthesis. Cell wall formation. The chain is UDP-N-acetylenolpyruvoylglucosamine reductase from Acidiphilium cryptum (strain JF-5).